The chain runs to 92 residues: Probable Fe(2+)-trafficking protein (92 aa).

It belongs to the Fe(2+)-trafficking protein family.

Functionally, could be a mediator in iron transactions between iron acquisition and iron-requiring processes, such as synthesis and/or repair of Fe-S clusters in biosynthetic enzymes. The chain is Probable Fe(2+)-trafficking protein from Shewanella sp. (strain W3-18-1).